A 188-amino-acid polypeptide reads, in one-letter code: Insulin-like growth factor 1 (188 aa).

Residues 45–73 are b; it reads GPETLCGAELVDTLQFVCGERGFYFSKPT. 3 disulfides stabilise this stretch: cysteine 50/cysteine 92, cysteine 62/cysteine 105, and cysteine 91/cysteine 96. The segment at 74-85 is c; sequence GYGPSSRRSHNR. Positions 86 to 106 are a; it reads GIVDECCFQSCELRRLEMYCA. Residues 107–114 are d; it reads PVKSGKAA. A propeptide spans 115 to 188 (e peptide); that stretch reads RSVRAQRHTD…GNTGGRNYRM (74 aa). The interval 115 to 188 is disordered; the sequence is RSVRAQRHTD…GNTGGRNYRM (74 aa). Residues 140–153 are compositionally biased toward basic and acidic residues; sequence RGTERRTAQHPDKT.

The protein belongs to the insulin family. All the isoforms are expressed in embryos, juvenile and adult liver, muscle and brain. At least one isoform is expressed in heart, kidney, testes, ovary, adipose tissue and spleen of juvenile salmon.

The protein localises to the secreted. Functionally, the insulin-like growth factors, isolated from plasma, are structurally and functionally related to insulin but have a much higher growth-promoting activity. Acts as a ligand for IGF1R. Binds to the alpha subunit of IGF1R, leading to the activation of the intrinsic tyrosine kinase activity which autophosphorylates tyrosine residues in the beta subunit thus initiatiating a cascade of down-stream signaling events leading to activation of the PI3K-AKT/PKB and the Ras-MAPK pathways. Binds to integrins. Its binding to integrins and subsequent ternary complex formation with integrins and IGFR1 are essential for IGF1 signaling. The chain is Insulin-like growth factor 1 from Oncorhynchus kisutch (Coho salmon).